The sequence spans 210 residues: Heart- and neural crest derivatives-expressed protein 2 (210 aa).

The disordered stretch occupies residues Ser-81–Glu-101. Basic residues predominate over residues Pro-90–Glu-101. The region spanning Lys-92–Leu-144 is the bHLH domain.

As to quaternary structure, efficient DNA binding requires dimerization with another bHLH protein. In terms of tissue distribution, heart, liver and spleen.

It localises to the nucleus. Functionally, essential for cardiac morphogenesis and for the development of branchial arches. Binds DNA on E-box consensus sequence 5'-CANNTG-3'. The sequence is that of Heart- and neural crest derivatives-expressed protein 2 (hand2) from Xenopus laevis (African clawed frog).